The primary structure comprises 720 residues: Fatty acid CoA ligase Acsl3 (720 aa).

The helical; Signal-anchor for type III membrane protein transmembrane segment at isoleucine 21–phenylalanine 41 threads the bilayer. The Cytoplasmic portion of the chain corresponds to tyrosine 42–lysine 720. The residue at position 683 (serine 683) is a Phosphoserine.

Belongs to the ATP-dependent AMP-binding enzyme family. Requires Mg(2+) as cofactor.

The protein resides in the mitochondrion outer membrane. Its subcellular location is the peroxisome membrane. It localises to the microsome membrane. The protein localises to the endoplasmic reticulum membrane. It catalyses the reaction a long-chain fatty acid + ATP + CoA = a long-chain fatty acyl-CoA + AMP + diphosphate. The enzyme catalyses (E)-hexadec-2-enoate + ATP + CoA = (2E)-hexadecenoyl-CoA + AMP + diphosphate. The catalysed reaction is (5Z,8Z,11Z,14Z)-eicosatetraenoate + ATP + CoA = (5Z,8Z,11Z,14Z)-eicosatetraenoyl-CoA + AMP + diphosphate. It carries out the reaction 15-hydroxy-(5Z,8Z,11Z,13E)-eicosatetraenoate + ATP + CoA = 15-hydroxy-(5Z,8Z,11Z,13E)-eicosatetraenoyl-CoA + AMP + diphosphate. It catalyses the reaction 12-hydroxy-(5Z,8Z,10E,14Z)-eicosatetraenoate + ATP + CoA = 12-hydroxy-(5Z,8Z,10E,14Z)-eicosatetraenoyl-CoA + AMP + diphosphate. The enzyme catalyses 5-hydroxy-(6E,8Z,11Z,14Z)-eicosatetraenoate + ATP + CoA = 5-hydroxy-(6E,8Z,11Z,14Z)-eicosatetraenoyl-CoA + AMP + diphosphate. The catalysed reaction is 14,15-epoxy-(5Z,8Z,11Z)-eicosatrienoate + ATP + CoA = 14,15-epoxy-(5Z,8Z,11Z)-eicosatrienoyl-CoA + AMP + diphosphate. It carries out the reaction 11,12-epoxy-(5Z,8Z,14Z)-eicosatrienoate + ATP + CoA = 11,12-epoxy-(5Z,8Z,14Z)-eicosatrienoyl-CoA + AMP + diphosphate. It catalyses the reaction a medium-chain fatty acid + ATP + CoA = a medium-chain fatty acyl-CoA + AMP + diphosphate. The enzyme catalyses hexadecanoate + ATP + CoA = hexadecanoyl-CoA + AMP + diphosphate. The catalysed reaction is tetradecanoate + ATP + CoA = tetradecanoyl-CoA + AMP + diphosphate. It carries out the reaction dodecanoate + ATP + CoA = dodecanoyl-CoA + AMP + diphosphate. It catalyses the reaction octadecanoate + ATP + CoA = octadecanoyl-CoA + AMP + diphosphate. The enzyme catalyses eicosanoate + ATP + CoA = eicosanoyl-CoA + AMP + diphosphate. The catalysed reaction is (9Z)-octadecenoate + ATP + CoA = (9Z)-octadecenoyl-CoA + AMP + diphosphate. It carries out the reaction (9Z)-hexadecenoate + ATP + CoA = (9Z)-hexadecenoyl-CoA + AMP + diphosphate. It catalyses the reaction (9Z,12Z)-octadecadienoate + ATP + CoA = (9Z,12Z)-octadecadienoyl-CoA + AMP + diphosphate. The enzyme catalyses (9Z,12Z,15Z)-octadecatrienoate + ATP + CoA = (9Z,12Z,15Z)-octadecatrienoyl-CoA + AMP + diphosphate. The catalysed reaction is (4Z,7Z,10Z,13Z,16Z,19Z)-docosahexaenoate + ATP + CoA = (4Z,7Z,10Z,13Z,16Z,19Z)-docosahexaenoyl-CoA + AMP + diphosphate. It carries out the reaction (5Z,8Z,11Z,14Z,17Z)-eicosapentaenoate + ATP + CoA = (5Z,8Z,11Z,14Z,17Z)-eicosapentaenoyl-CoA + AMP + diphosphate. It catalyses the reaction a fatty acid + ATP + CoA = a fatty acyl-CoA + AMP + diphosphate. Acyl-CoA synthetases (ACSL) activates long-chain fatty acids for both synthesis of cellular lipids, and degradation via beta-oxidation. ACSL3 is required for the incorporation of fatty acids into phosphatidylcholine, the major phospholipid located on the surface of VLDL (very low density lipoproteins). Has mainly an anabolic role in energy metabolism. Mediates hepatic lipogenesis. Preferentially uses myristate, laurate, arachidonate and eicosapentaenoate as substrates. Both isoforms exhibit the same level of activity. This chain is Fatty acid CoA ligase Acsl3, found in Mus musculus (Mouse).